The primary structure comprises 299 residues: 5-azacytidine resistance protein azr1 (299 aa).

One can recognise a PPM-type phosphatase domain in the interval 35 to 293 (KSHFPSPATL…DDTTITCLLI (259 aa)).

Functionally, confers azacytidine resistance in high copy. This chain is 5-azacytidine resistance protein azr1 (azr1), found in Schizosaccharomyces pombe (strain 972 / ATCC 24843) (Fission yeast).